Reading from the N-terminus, the 595-residue chain is Acriflavine sensitivity control protein acr-2 (595 aa).

Positions 22 to 49 (CYNCHRKRLRCDKSLPACLKCSINGEEC) form a DNA-binding region, zn(2)-C6 fungal-type. The span at 69 to 88 (TTRTTNKTNFNGTNTTTPRT) shows a compositional bias: low complexity. Positions 69 to 172 (TTRTTNKTNF…PDDNPDPSSQ (104 aa)) are disordered. The segment covering 89-117 (VKSSTPTQAPTPSDSPRQLDTDVTSSSAP) has biased composition (polar residues). Positions 118 to 138 (SHTCSRSTTTSTTTTRISSPT) are enriched in low complexity.

Its subcellular location is the nucleus. Its function is as follows. Probable transcriptional regulator. This chain is Acriflavine sensitivity control protein acr-2 (acr-2), found in Neurospora crassa (strain ATCC 24698 / 74-OR23-1A / CBS 708.71 / DSM 1257 / FGSC 987).